The sequence spans 282 residues: ABC transporter I family member 21 (282 aa).

The 236-residue stretch at 13 to 248 (IRVSGMQFSY…KTSPNLLSVV (236 aa)) folds into the ABC transporter domain. 46–53 (GANGSGKT) serves as a coordination point for ATP.

Belongs to the ABC transporter superfamily. ABCI family. Expressed in root elongating zone and root meristem, as well as in elongating etiolated hypocotyls.

The protein localises to the cytoplasm. The protein is ABC transporter I family member 21 (ABCI21) of Arabidopsis thaliana (Mouse-ear cress).